The sequence spans 353 residues: Adenine deaminase (353 aa).

His-19, His-21, and His-208 together coordinate Zn(2+). The active-site Proton donor is the Glu-211. Asp-289 contributes to the Zn(2+) binding site. Asp-290 serves as a coordination point for substrate.

This sequence belongs to the metallo-dependent hydrolases superfamily. Adenosine and AMP deaminases family. Adenine deaminase type 2 subfamily. It depends on Zn(2+) as a cofactor.

It localises to the cytoplasm. The protein resides in the nucleus. The catalysed reaction is adenine + H2O + H(+) = hypoxanthine + NH4(+). Its function is as follows. Catalyzes the hydrolytic deamination of adenine to hypoxanthine. Plays an important role in the purine salvage pathway and in nitrogen catabolism. The chain is Adenine deaminase from Gibberella zeae (strain ATCC MYA-4620 / CBS 123657 / FGSC 9075 / NRRL 31084 / PH-1) (Wheat head blight fungus).